Consider the following 120-residue polypeptide: MQEIMLKSKIHMAKVTDKSINYMGSIGIDTELLEKAGMKPYELVLVADVNNGQRFVTYIIPEEKGSKKIVINGAAARLVEQGDRVIIMAFGMYDSNEYKGPKVIIMNEKNEIVEIKQEGV.

Catalysis depends on serine 25, which acts as the Schiff-base intermediate with substrate; via pyruvic acid. The residue at position 25 (serine 25) is a Pyruvic acid (Ser). Threonine 57 contacts substrate. Tyrosine 58 serves as the catalytic Proton donor. 73–75 contacts substrate; that stretch reads GAA.

This sequence belongs to the PanD family. In terms of assembly, heterooctamer of four alpha and four beta subunits. Requires pyruvate as cofactor. Post-translationally, is synthesized initially as an inactive proenzyme, which is activated by self-cleavage at a specific serine bond to produce a beta-subunit with a hydroxyl group at its C-terminus and an alpha-subunit with a pyruvoyl group at its N-terminus.

It is found in the cytoplasm. The enzyme catalyses L-aspartate + H(+) = beta-alanine + CO2. It participates in cofactor biosynthesis; (R)-pantothenate biosynthesis; beta-alanine from L-aspartate: step 1/1. Functionally, catalyzes the pyruvoyl-dependent decarboxylation of aspartate to produce beta-alanine. This is Aspartate 1-decarboxylase from Thermosipho africanus (strain TCF52B).